Reading from the N-terminus, the 198-residue chain is Recombination protein RecR (198 aa).

A C4-type zinc finger spans residues 57–72 (CSVCGRLTDDDPCIIC). The 96-residue stretch at 80–175 (TKILVVEDSK…KVTRLARGLA (96 aa)) folds into the Toprim domain.

It belongs to the RecR family.

Its function is as follows. May play a role in DNA repair. It seems to be involved in an RecBC-independent recombinational process of DNA repair. It may act with RecF and RecO. In Streptococcus thermophilus (strain CNRZ 1066), this protein is Recombination protein RecR.